The primary structure comprises 112 residues: Cornifelin homolog (112 aa).

Belongs to the cornifelin family.

This is Cornifelin homolog (cnfn) from Danio rerio (Zebrafish).